We begin with the raw amino-acid sequence, 289 residues long: 4-hydroxybenzoate octaprenyltransferase (289 aa).

7 helical membrane passes run Leu-33–Val-53, Leu-99–Ile-119, Leu-141–Val-161, Glu-163–Tyr-183, Leu-213–Asn-233, Glu-238–Val-258, and Ala-268–Trp-288.

The protein belongs to the UbiA prenyltransferase family. Mg(2+) serves as cofactor.

It localises to the cell inner membrane. The catalysed reaction is all-trans-octaprenyl diphosphate + 4-hydroxybenzoate = 4-hydroxy-3-(all-trans-octaprenyl)benzoate + diphosphate. Its pathway is cofactor biosynthesis; ubiquinone biosynthesis. Functionally, catalyzes the prenylation of para-hydroxybenzoate (PHB) with an all-trans polyprenyl group. Mediates the second step in the final reaction sequence of ubiquinone-8 (UQ-8) biosynthesis, which is the condensation of the polyisoprenoid side chain with PHB, generating the first membrane-bound Q intermediate 3-octaprenyl-4-hydroxybenzoate. The sequence is that of 4-hydroxybenzoate octaprenyltransferase from Enterobacter sp. (strain 638).